The chain runs to 259 residues: Dihydroorotate dehydrogenase B (NAD(+)), electron transfer subunit (259 aa).

Residues 2 to 102 (MQKQNMIVVN…LGPLGHGFPL (101 aa)) enclose the FAD-binding FR-type domain. FAD contacts are provided by residues 53–56 (RPIS), 70–72 (LYR), and 77–78 (GT). [2Fe-2S] cluster contacts are provided by cysteine 221, cysteine 226, cysteine 229, and cysteine 246.

Belongs to the PyrK family. As to quaternary structure, heterotetramer of 2 PyrK and 2 PyrD type B subunits. The cofactor is [2Fe-2S] cluster. It depends on FAD as a cofactor.

Its pathway is pyrimidine metabolism; UMP biosynthesis via de novo pathway; orotate from (S)-dihydroorotate (NAD(+) route): step 1/1. Its function is as follows. Responsible for channeling the electrons from the oxidation of dihydroorotate from the FMN redox center in the PyrD type B subunit to the ultimate electron acceptor NAD(+). The chain is Dihydroorotate dehydrogenase B (NAD(+)), electron transfer subunit from Bacillus cereus (strain B4264).